The sequence spans 83 residues: Turripeptide Lol11.2 (83 aa).

An N-terminal signal peptide occupies residues 1–27; the sequence is MARLMMTVGCLIFIVVLLDMMVPVSNT.

The protein belongs to the conopeptide I2-like superfamily. In terms of processing, contains 4 disulfide bonds. In terms of tissue distribution, expressed by the venom duct.

It localises to the secreted. Acts as a neurotoxin by inhibiting voltage-gated potassium channels (Kv). This chain is Turripeptide Lol11.2, found in Iotyrris olangoensis (Sea snail).